Reading from the N-terminus, the 219-residue chain is ATP-dependent dethiobiotin synthetase BioD (219 aa).

12-17 (DLGKTH) lines the ATP pocket. Position 16 (threonine 16) interacts with Mg(2+). Lysine 37 is an active-site residue. Serine 41 provides a ligand contact to substrate. Residues aspartate 52, 115-118 (EGAG), and 175-176 (SE) contribute to the ATP site. Residues aspartate 52 and glutamate 115 each contribute to the Mg(2+) site.

Belongs to the dethiobiotin synthetase family. Homodimer. It depends on Mg(2+) as a cofactor.

The protein localises to the cytoplasm. The catalysed reaction is (7R,8S)-7,8-diammoniononanoate + CO2 + ATP = (4R,5S)-dethiobiotin + ADP + phosphate + 3 H(+). It functions in the pathway cofactor biosynthesis; biotin biosynthesis; biotin from 7,8-diaminononanoate: step 1/2. Its function is as follows. Catalyzes a mechanistically unusual reaction, the ATP-dependent insertion of CO2 between the N7 and N8 nitrogen atoms of 7,8-diaminopelargonic acid (DAPA, also called 7,8-diammoniononanoate) to form a ureido ring. This is ATP-dependent dethiobiotin synthetase BioD from Caulobacter vibrioides (strain ATCC 19089 / CIP 103742 / CB 15) (Caulobacter crescentus).